Consider the following 260-residue polypeptide: Carbonic anhydrase 2 (260 aa).

Residue Ser2 is modified to N-acetylserine. At Ser2 the chain carries Phosphoserine. Residues 3 to 259 (HHWGYSKSNG…LKNRKIKASF (257 aa)) form the Alpha-carbonic anhydrase domain. The segment at 16 to 39 (WHKEFPIANGDRQSPVDIDTGTAQ) is disordered. His64 serves as the catalytic Proton donor/acceptor. Position 87 is a phosphoserine (Ser87). 3 residues coordinate Zn(2+): His94, His96, and His119. Ser165 is subject to Phosphoserine. 198-199 (TT) is a substrate binding site. Position 232 is a phosphoserine (Ser232).

The protein belongs to the alpha-carbonic anhydrase family. Interacts with SLC4A4 and SLC26A6. Interaction with SLC4A7 regulates SLC4A7 transporter activity. The cofactor is Zn(2+).

Its subcellular location is the cytoplasm. It localises to the cell membrane. The catalysed reaction is hydrogencarbonate + H(+) = CO2 + H2O. It catalyses the reaction urea = cyanamide + H2O. With respect to regulation, inhibited by acetazolamide. In terms of biological role, catalyzes the reversible hydration of carbon dioxide. Can also hydrate cyanamide to urea. Involved in the regulation of fluid secretion into the anterior chamber of the eye. Essential for bone resorption and osteoclast differentiation. Contributes to intracellular pH regulation in the duodenal upper villous epithelium during proton-coupled peptide absorption. Stimulates the chloride-bicarbonate exchange activity of SLC26A6. The protein is Carbonic anhydrase 2 (Ca2) of Rattus norvegicus (Rat).